Here is a 495-residue protein sequence, read N- to C-terminus: Leucine aminopeptidase 2 (495 aa).

Positions 1-21 (MKSQLLSLAVAVSTISQGVVG) are cleaved as a signal peptide. The PA domain maps to 124-218 (PPANKIMAEL…EDGKNLASLV (95 aa)). 2 N-linked (GlcNAc...) asparagine glycosylation sites follow: asparagine 142 and asparagine 235. Zn(2+)-binding residues include histidine 259 and aspartate 271. The N-linked (GlcNAc...) asparagine glycan is linked to asparagine 272. Residue glutamate 303 is the Proton acceptor of the active site. Glutamate 304 and aspartate 332 together coordinate Zn(2+). A glycan (N-linked (GlcNAc...) asparagine) is linked at asparagine 352. Histidine 430 provides a ligand contact to Zn(2+).

It belongs to the peptidase M28 family. M28A subfamily. As to quaternary structure, monomer. Zn(2+) is required as a cofactor.

The protein resides in the secreted. Extracellular aminopeptidase that releases a wide variety of amino acids from natural peptides and contributes to pathogenicity. This chain is Leucine aminopeptidase 2 (LAP2), found in Trichophyton equinum (Horse ringworm fungus).